Consider the following 213-residue polypeptide: MLTTEKYQGLNWSKNHGLIPAIIQHSISGEVLMLGYMNQESMAITEKTGYVTFFSRSKNRLWIKGESSGNVLKLINWYPDCDFDSLLILVLPQGFTCHKNTNSCFHPALTDFSFLFQLENIISIKKNHTSSHGNQQSSYTSDLYTSGIERIAQKVGEEGLETALAAVSRNSKSLIDEASDLIYHLLVLLQHESLNFHDVIQELRVRSKLKKKH.

A phosphoribosyl-AMP cyclohydrolase region spans residues 1–114 (MLTTEKYQGL…FHPALTDFSF (114 aa)). Positions 115–213 (LFQLENIISI…RVRSKLKKKH (99 aa)) are phosphoribosyl-ATP pyrophosphohydrolase.

In the N-terminal section; belongs to the PRA-CH family. The protein in the C-terminal section; belongs to the PRA-PH family.

The protein localises to the cytoplasm. It carries out the reaction 1-(5-phospho-beta-D-ribosyl)-ATP + H2O = 1-(5-phospho-beta-D-ribosyl)-5'-AMP + diphosphate + H(+). The enzyme catalyses 1-(5-phospho-beta-D-ribosyl)-5'-AMP + H2O = 1-(5-phospho-beta-D-ribosyl)-5-[(5-phospho-beta-D-ribosylamino)methylideneamino]imidazole-4-carboxamide. It participates in amino-acid biosynthesis; L-histidine biosynthesis; L-histidine from 5-phospho-alpha-D-ribose 1-diphosphate: step 2/9. Its pathway is amino-acid biosynthesis; L-histidine biosynthesis; L-histidine from 5-phospho-alpha-D-ribose 1-diphosphate: step 3/9. This Blochmanniella floridana protein is Histidine biosynthesis bifunctional protein HisIE.